Here is a 256-residue protein sequence, read N- to C-terminus: Homeobox-leucine zipper protein HOX28 (256 aa).

The tract at residues 56–86 (ACSPGSPVSSGSGKRGSGSGSGDEVDDAGCD) is disordered. Positions 58-67 (SPGSPVSSGS) are enriched in low complexity. The homeobox DNA-binding region spans 91–150 (GARKKLRLSKDQAAVLEECFKTHHTLTPKQKVALAKSLNLRPRQVEVWFQNRRARTKLKQ). Residues 149–193 (KQTEVDCEHLKRWCDQLADDNRRLHKELAELRALKATPTPPAAAP) form a leucine-zipper region.

This sequence belongs to the HD-ZIP homeobox family. Class II subfamily. As to expression, expressed in seedlings, roots, stems and panicles.

It is found in the nucleus. Its function is as follows. Probable transcription factor. In Oryza sativa subsp. indica (Rice), this protein is Homeobox-leucine zipper protein HOX28 (HOX28).